A 215-amino-acid polypeptide reads, in one-letter code: Chaperone protein TorD (215 aa).

The protein belongs to the TorD/DmsD family. TorD subfamily.

It is found in the cytoplasm. Its function is as follows. Involved in the biogenesis of TorA. Acts on TorA before the insertion of the molybdenum cofactor and, as a result, probably favors a conformation of the apoenzyme that is competent for acquiring the cofactor. In Aliivibrio salmonicida (strain LFI1238) (Vibrio salmonicida (strain LFI1238)), this protein is Chaperone protein TorD.